Here is a 333-residue protein sequence, read N- to C-terminus: Holliday junction branch migration complex subunit RuvB (333 aa).

Residues 1–182 are large ATPase domain (RuvB-L); sequence MDERLLSGES…FGVLSRLEYY (182 aa). ATP is bound by residues L21, R22, G63, K66, T67, T68, 129–131, R172, Y182, and R219; that span reads EDF. T67 is a binding site for Mg(2+). The tract at residues 183 to 253 is small ATPAse domain (RuvB-S); sequence TVDQLSAIVE…ITQMALELLQ (71 aa). The tract at residues 256–333 is head domain (RuvB-H); the sequence is KLGLDHIDHK…EHFGMEMPKV (78 aa). The DNA site is built by R311 and R316.

Belongs to the RuvB family. As to quaternary structure, homohexamer. Forms an RuvA(8)-RuvB(12)-Holliday junction (HJ) complex. HJ DNA is sandwiched between 2 RuvA tetramers; dsDNA enters through RuvA and exits via RuvB. An RuvB hexamer assembles on each DNA strand where it exits the tetramer. Each RuvB hexamer is contacted by two RuvA subunits (via domain III) on 2 adjacent RuvB subunits; this complex drives branch migration. In the full resolvosome a probable DNA-RuvA(4)-RuvB(12)-RuvC(2) complex forms which resolves the HJ.

It is found in the cytoplasm. The catalysed reaction is ATP + H2O = ADP + phosphate + H(+). The RuvA-RuvB-RuvC complex processes Holliday junction (HJ) DNA during genetic recombination and DNA repair, while the RuvA-RuvB complex plays an important role in the rescue of blocked DNA replication forks via replication fork reversal (RFR). RuvA specifically binds to HJ cruciform DNA, conferring on it an open structure. The RuvB hexamer acts as an ATP-dependent pump, pulling dsDNA into and through the RuvAB complex. RuvB forms 2 homohexamers on either side of HJ DNA bound by 1 or 2 RuvA tetramers; 4 subunits per hexamer contact DNA at a time. Coordinated motions by a converter formed by DNA-disengaged RuvB subunits stimulates ATP hydrolysis and nucleotide exchange. Immobilization of the converter enables RuvB to convert the ATP-contained energy into a lever motion, pulling 2 nucleotides of DNA out of the RuvA tetramer per ATP hydrolyzed, thus driving DNA branch migration. The RuvB motors rotate together with the DNA substrate, which together with the progressing nucleotide cycle form the mechanistic basis for DNA recombination by continuous HJ branch migration. Branch migration allows RuvC to scan DNA until it finds its consensus sequence, where it cleaves and resolves cruciform DNA. The polypeptide is Holliday junction branch migration complex subunit RuvB (Bacillus cereus (strain 03BB102)).